A 555-amino-acid chain; its full sequence is 3-oxocholest-4-en-26-oate--CoA ligase (555 aa).

Residues 172–180 (TGGTTGHPK), aspartate 418, arginine 433, and lysine 524 each bind ATP. Positions 525–555 (PDYRWAKDQTGLRPADEVYNNGDGNGAAATG) are disordered. Low complexity predominate over residues 544–555 (NNGDGNGAAATG).

Belongs to the ATP-dependent AMP-binding enzyme family.

The enzyme catalyses (25S)-3-oxocholest-4-en-26-oate + ATP + CoA = (25S)-3-oxocholest-4-en-26-oyl-CoA + AMP + diphosphate. The protein operates within steroid metabolism; cholesterol metabolism. In terms of biological role, involved in the degradation of the side chains of C-24 branched-chain sterols. Catalyzes the ATP-dependent CoA thioesterification of the sterol 3-oxocholest-4-en-26-oate to yield 3-oxocholest-4-en-26-oyl-CoA. It can also use beta-sitosterol, campesterol and 3beta-hydroxy-5-cholesten-26-oate. The sequence is that of 3-oxocholest-4-en-26-oate--CoA ligase from Rhodococcus rhodochrous.